The chain runs to 273 residues: Protein B4 (273 aa).

Positions 1–24 (MAPKKAVAAPEGGNKENAAVKGSS) are disordered. An H15 domain is found at 40-118 (SHPPTLSMVV…GATGRFKLAK (79 aa)). A disordered region spans residues 120 to 273 (VKTTKAGKEN…AGKKGKKVTN (154 aa)). Residues 154 to 256 (AKTEKEPKGE…KDVKAQKDST (103 aa)) are compositionally biased toward basic and acidic residues. 3 repeat units span residues 189-198 (KEAKEVDKAN), 199-208 (KEAKEVDKAN), and 209-217 (KEAKEVDKA). The segment at 189-217 (KEAKEVDKANKEAKEVDKANKEAKEVDKA) is 3 X 10 AA tandem repeats. Residues 264-273 (AGKKGKKVTN) are compositionally biased toward basic residues.

Belongs to the histone H1/H5 family. In terms of assembly, interacts with nap1l1.

It localises to the nucleus. It is found in the chromosome. This is Protein B4 (b4) from Xenopus laevis (African clawed frog).